A 263-amino-acid polypeptide reads, in one-letter code: Putative cysteine-rich repeat secretory protein 31 (263 aa).

A signal peptide spans 1-32 (MHNSYSLSKRLVLVLFLAVVATQLFLIRNVSS). 2 Gnk2-homologous domains span residues 39-141 (YLHH…AIEV) and 146-260 (YDNN…FYPF).

It belongs to the cysteine-rich repeat secretory protein family.

It is found in the secreted. The protein is Putative cysteine-rich repeat secretory protein 31 (CRRSP31) of Arabidopsis thaliana (Mouse-ear cress).